A 309-amino-acid chain; its full sequence is Protoheme IX farnesyltransferase (309 aa).

Helical transmembrane passes span 35-55, 64-84, 114-134, 135-155, 161-181, 187-207, 231-251, 253-273, and 289-309; these read IGIVNSNLITTFAGMWLAFYF, LHLVFFTLFGAALVIAGSCAI, VLWLGIGLVAIGEMGLLMTTV, TAAVVGLIGMATYVFLYTLWT, INTVVGSISGAVPPVIGWTAV, IVPLILFLIMFLWQPPHFLAL, MTKRQIIVWVACLLPLPFYLF, LGVPFLIVATLLNVGWLLLGL, and FVYSLNYLTILFVAMIIATLW.

It belongs to the UbiA prenyltransferase family. Protoheme IX farnesyltransferase subfamily. In terms of assembly, interacts with CtaA.

It is found in the cell membrane. The catalysed reaction is heme b + (2E,6E)-farnesyl diphosphate + H2O = Fe(II)-heme o + diphosphate. It functions in the pathway porphyrin-containing compound metabolism; heme O biosynthesis; heme O from protoheme: step 1/1. Functionally, converts heme B (protoheme IX) to heme O by substitution of the vinyl group on carbon 2 of heme B porphyrin ring with a hydroxyethyl farnesyl side group. This is Protoheme IX farnesyltransferase from Geobacillus kaustophilus (strain HTA426).